An 833-amino-acid polypeptide reads, in one-letter code: Leucine--tRNA ligase (833 aa).

Residues 41-52 (PYPSGAGLHVGH) carry the 'HIGH' region motif. Positions 610 to 614 (KMSKS) match the 'KMSKS' region motif. ATP is bound at residue Lys-613.

Belongs to the class-I aminoacyl-tRNA synthetase family.

The protein localises to the cytoplasm. It carries out the reaction tRNA(Leu) + L-leucine + ATP = L-leucyl-tRNA(Leu) + AMP + diphosphate. This Streptococcus equi subsp. zooepidemicus (strain H70) protein is Leucine--tRNA ligase.